A 244-amino-acid polypeptide reads, in one-letter code: tRNA pseudouridine synthase A (244 aa).

D52 acts as the Nucleophile in catalysis. Y110 contacts substrate.

The protein belongs to the tRNA pseudouridine synthase TruA family. In terms of assembly, homodimer.

The enzyme catalyses uridine(38/39/40) in tRNA = pseudouridine(38/39/40) in tRNA. Functionally, formation of pseudouridine at positions 38, 39 and 40 in the anticodon stem and loop of transfer RNAs. The sequence is that of tRNA pseudouridine synthase A from Caldicellulosiruptor bescii (strain ATCC BAA-1888 / DSM 6725 / KCTC 15123 / Z-1320) (Anaerocellum thermophilum).